A 275-amino-acid polypeptide reads, in one-letter code: NH(3)-dependent NAD(+) synthetase (275 aa).

ATP is bound at residue 50-57 (GISGGVDS). Asp56 contacts Mg(2+). Arg147 contributes to the deamido-NAD(+) binding site. ATP is bound at residue Thr167. Glu172 lines the Mg(2+) pocket. The deamido-NAD(+) site is built by Lys180 and Asp187. 2 residues coordinate ATP: Lys196 and Thr218. Deamido-NAD(+) is bound at residue 267-268 (HK).

Belongs to the NAD synthetase family. Homodimer.

The enzyme catalyses deamido-NAD(+) + NH4(+) + ATP = AMP + diphosphate + NAD(+) + H(+). The protein operates within cofactor biosynthesis; NAD(+) biosynthesis; NAD(+) from deamido-NAD(+) (ammonia route): step 1/1. In terms of biological role, catalyzes the ATP-dependent amidation of deamido-NAD to form NAD. Uses ammonia as a nitrogen source. The polypeptide is NH(3)-dependent NAD(+) synthetase (Pseudomonas syringae pv. tomato (strain ATCC BAA-871 / DC3000)).